A 489-amino-acid polypeptide reads, in one-letter code: UDP-N-acetylmuramate--L-alanine ligase (489 aa).

128 to 134 (GTHGKTT) contacts ATP.

It belongs to the MurCDEF family.

The protein localises to the cytoplasm. The catalysed reaction is UDP-N-acetyl-alpha-D-muramate + L-alanine + ATP = UDP-N-acetyl-alpha-D-muramoyl-L-alanine + ADP + phosphate + H(+). Its pathway is cell wall biogenesis; peptidoglycan biosynthesis. In terms of biological role, cell wall formation. The chain is UDP-N-acetylmuramate--L-alanine ligase from Shewanella woodyi (strain ATCC 51908 / MS32).